Here is a 410-residue protein sequence, read N- to C-terminus: Class E basic helix-loop-helix protein 41 (410 aa).

Lysine 31 participates in a covalent cross-link: Glycyl lysine isopeptide (Lys-Gly) (interchain with G-Cter in SUMO2). In terms of domain architecture, bHLH spans 44–99 (TYKLPHRLIEKKRRDRINECIAQLKDLLPEHLKLTTLGHLEKAVVLELTLKHLKAL). Lysine 121 is covalently cross-linked (Glycyl lysine isopeptide (Lys-Gly) (interchain with G-Cter in SUMO2)). An Orange domain is found at 131-166 (FHSGFQTCAKEVLQYLARFESWTPREPRCAQLVSHL). Disordered regions lie at residues 209-255 (IQRT…KRPK) and 360-410 (GATA…KDAP). Lysine 240 is covalently cross-linked (Glycyl lysine isopeptide (Lys-Gly) (interchain with G-Cter in SUMO2)).

As to quaternary structure, homodimer. Heterodimer with BHLHE40/DEC1. Interacts with CIART. Interacts with BMAL1. Interacts with RXRA. Interacts with NR0B2 and HNF1A. Expressed in skeletal muscle, brain and lung.

The protein resides in the nucleus. Its function is as follows. Transcriptional repressor involved in the regulation of the circadian rhythm by negatively regulating the activity of the clock genes and clock-controlled genes. Acts as the negative limb of a novel autoregulatory feedback loop (DEC loop) which differs from the one formed by the PER and CRY transcriptional repressors (PER/CRY loop). Both these loops are interlocked as it represses the expression of PER1 and in turn is repressed by PER1/2 and CRY1/2. Represses the activity of the circadian transcriptional activator: CLOCK-BMAL1 heterodimer by competing for the binding to E-box elements (5'-CACGTG-3') found within the promoters of its target genes. Negatively regulates its own expression and the expression of DBP and BHLHE41/DEC2. Acts as a corepressor of RXR and the RXR-LXR heterodimers and represses the ligand-induced RXRA/B/G, NR1H3/LXRA, NR1H4 and VDR transactivation activity. Inhibits HNF1A-mediated transactivation of CYP1A2, CYP2E1 and CYP3A11. This Mus musculus (Mouse) protein is Class E basic helix-loop-helix protein 41 (Bhlhe41).